Reading from the N-terminus, the 385-residue chain is Putative non-inhibitory serpin-Z11 (385 aa).

Positions glycine 324–proline 348 are RCL.

This sequence belongs to the serpin family.

This is Putative non-inhibitory serpin-Z11 from Oryza sativa subsp. japonica (Rice).